The sequence spans 551 residues: Chloride channel CLIC-like protein 1 (551 aa).

An N-terminal signal peptide occupies residues 1-18 (MLCSLLLCECLLLVAGYA). The Lumenal segment spans residues 19 to 184 (HDDDWIDPTD…EDSFGVDPYN (166 aa)). The helical transmembrane segment at 185–205 (VLMVLLCLLCIVVLVATELWT) threads the bilayer. At 206–216 (YVRWYTQLRRV) the chain is on the cytoplasmic side. A helical membrane pass occupies residues 217-237 (LIISFLFSLGWNWMYLYKLAF). The Lumenal portion of the chain corresponds to 238 to 329 (AQHQAEVAKM…GEFIKALMKE (92 aa)). The chain crosses the membrane as a helical span at residues 330–350 (IPALLHLPVLIIMALAILSFC). At 351 to 551 (YGAGKSVHVL…GQDPVSSPCG (201 aa)) the chain is on the cytoplasmic side. Residues 363–415 (IGGPESEPPQALRPRDRRRQEEIDYRPDGGAGDADFHYRGQMGPTEQGPYAKT) are disordered. Over residues 380 to 389 (RRQEEIDYRP) the composition is skewed to basic and acidic residues. Ser-438 and Ser-464 each carry phosphoserine. Positions 447-551 (VPDAEAREHP…GQDPVSSPCG (105 aa)) are disordered. The residue at position 482 (Thr-482) is a Phosphothreonine. Positions 488–508 (TESSQSAKPVSGQDTSGNTEG) are enriched in polar residues. Ser-509, Ser-524, and Ser-532 each carry phosphoserine.

Belongs to the chloride channel MCLC family. In terms of assembly, homomultimers. Interacts with mitochondrial protein PIGBOS1 (via C-terminus); the interaction occurs at the mitochondria-associated endoplasmic reticulum (ER) membrane, a zone of contact between the ER and mitochondrial membranes, but does not appear to play a role in ER-mitochondria tethering and is not affected by ER stress. Interacts with CALR. As to expression, expressed in the retina of the eye, with extensive expression in the lamina cribrosa, optic nerve, ganglion cell layer, inner nuclear layer, outer nuclear layer and retinal pigment epithelium.

Its subcellular location is the endoplasmic reticulum membrane. The catalysed reaction is chloride(in) = chloride(out). The enzyme catalyses bromide(in) = bromide(out). It carries out the reaction nitrate(in) = nitrate(out). It catalyses the reaction fluoride(in) = fluoride(out). With respect to regulation, inhibited by ER lumenal Ca(2+). In terms of biological role, anion-selective channel with Ca(2+)-dependent and voltage-independent gating. Permeable to small monovalent anions with selectivity for bromide &gt; chloride &gt; nitrate &gt; fluoride. Operates in the endoplasmic reticulum (ER) membrane where it mediates chloride efflux to compensate for the loss of positive charges from the ER lumen upon Ca(2+) release. Contributes to the maintenance of ER Ca(2+) pools and activation of unfolded protein response to prevent accumulation of misfolded proteins in the ER lumen. Particularly involved in ER homeostasis mechanisms underlying motor neurons and retinal photoreceptors survival. The protein is Chloride channel CLIC-like protein 1 of Homo sapiens (Human).